A 198-amino-acid chain; its full sequence is MYDYIKGQLTKITAKYIVVEANGLGYMITVANPYSFTDCVNQQVTIYLHQVIREDAQLLFGFHSEEEKDVFLKLISVSGIGPTTALAIVAVDDNRGLVNAIDNSDIKYLMRFPKIGKKTAQQMVLDLAGKFVEAPKEESSKPPKAKQQGNEQLDEAVEALLALGYKATELKKIRAFFEGTSETAEQYIKSALKMLMKG.

A domain I region spans residues 1–63 (MYDYIKGQLT…EDAQLLFGFH (63 aa)). Positions 64-142 (SEEEKDVFLK…EAPKEESSKP (79 aa)) are domain II. The segment at 143–147 (PKAKQ) is flexible linker. Residues 148–198 (QGNEQLDEAVEALLALGYKATELKKIRAFFEGTSETAEQYIKSALKMLMKG) are domain III.

The protein belongs to the RuvA family. Homotetramer. Forms an RuvA(8)-RuvB(12)-Holliday junction (HJ) complex. HJ DNA is sandwiched between 2 RuvA tetramers; dsDNA enters through RuvA and exits via RuvB. An RuvB hexamer assembles on each DNA strand where it exits the tetramer. Each RuvB hexamer is contacted by two RuvA subunits (via domain III) on 2 adjacent RuvB subunits; this complex drives branch migration. In the full resolvosome a probable DNA-RuvA(4)-RuvB(12)-RuvC(2) complex forms which resolves the HJ.

Its subcellular location is the cytoplasm. Its function is as follows. The RuvA-RuvB-RuvC complex processes Holliday junction (HJ) DNA during genetic recombination and DNA repair, while the RuvA-RuvB complex plays an important role in the rescue of blocked DNA replication forks via replication fork reversal (RFR). RuvA specifically binds to HJ cruciform DNA, conferring on it an open structure. The RuvB hexamer acts as an ATP-dependent pump, pulling dsDNA into and through the RuvAB complex. HJ branch migration allows RuvC to scan DNA until it finds its consensus sequence, where it cleaves and resolves the cruciform DNA. This Streptococcus equi subsp. zooepidemicus (strain H70) protein is Holliday junction branch migration complex subunit RuvA.